Consider the following 421-residue polypeptide: Aspartokinase (421 aa).

Lysine 7–glycine 10 serves as a coordination point for ATP. Substrate is bound at residue arginine 25–lysine 30. Serine 41 lines the ATP pocket. Residues aspartate 45–aspartate 49, glutamate 74, leucine 125–glutamate 126, arginine 151–serine 154, and serine 154 contribute to the substrate site. ATP contacts are provided by residues threonine 174 to aspartate 175, phenylalanine 180 to arginine 185, and lysine 210. ACT domains follow at residues valine 267–serine 348 and leucine 349–arginine 421. Substrate-binding positions include aspartate 274, aspartate 274–alanine 279, asparagine 292–aspartate 294, glutamine 298, valine 360–threonine 361, asparagine 374–isoleucine 375, and serine 381–glutamate 382.

It belongs to the aspartokinase family. Heterotetramer consisting of 2 isoforms Alpha (catalytic and regulation) and of a homodimer of 2 isoforms Beta (regulation).

It catalyses the reaction L-aspartate + ATP = 4-phospho-L-aspartate + ADP. It participates in amino-acid biosynthesis; L-lysine biosynthesis via DAP pathway; (S)-tetrahydrodipicolinate from L-aspartate: step 1/4. The protein operates within amino-acid biosynthesis; L-methionine biosynthesis via de novo pathway; L-homoserine from L-aspartate: step 1/3. Its pathway is amino-acid biosynthesis; L-threonine biosynthesis; L-threonine from L-aspartate: step 1/5. Feedback inhibition by lysine and threonine. Catalyzes the phosphorylation of the beta-carboxyl group of aspartic acid with ATP to yield 4-phospho-L-aspartate, which is involved in the branched biosynthetic pathway leading to the biosynthesis of amino acids lysine, threonine, isoleucine and methionine. The sequence is that of Aspartokinase (ask) from Mycobacterium bovis (strain ATCC BAA-935 / AF2122/97).